Reading from the N-terminus, the 316-residue chain is Transaldolase (316 aa).

Lys-132 (schiff-base intermediate with substrate) is an active-site residue.

The protein belongs to the transaldolase family. Type 1 subfamily. Homodimer.

It is found in the cytoplasm. The catalysed reaction is D-sedoheptulose 7-phosphate + D-glyceraldehyde 3-phosphate = D-erythrose 4-phosphate + beta-D-fructose 6-phosphate. It participates in carbohydrate degradation; pentose phosphate pathway; D-glyceraldehyde 3-phosphate and beta-D-fructose 6-phosphate from D-ribose 5-phosphate and D-xylulose 5-phosphate (non-oxidative stage): step 2/3. Functionally, transaldolase is important for the balance of metabolites in the pentose-phosphate pathway. The sequence is that of Transaldolase from Marinomonas sp. (strain MWYL1).